The chain runs to 236 residues: 4-aminobenzoate synthase (236 aa).

6 residues coordinate Fe(2+): E87, H94, E148, H180, D184, and H187.

It belongs to the CADD family. Homodimer. It depends on Fe(2+) as a cofactor. The cofactor is Mn(2+).

In terms of biological role, involved in de novo para-aminobenzoate (PABA) biosynthesis. Acts as a self-sacrificing or 'suicide' enzyme that utilizes its own active site tyrosine residue(s) as the substrate for PABA synthesis. The side chain of the tyrosine residue is released from the protein backbone via cleavage of the C(alpha)-C(beta) bond, leaving a glycine in place of the original tyrosine residue. Reaction requires O(2) and a reduced dimetal cofactor. The chain is 4-aminobenzoate synthase from Chlamydia muridarum (strain MoPn / Nigg).